The chain runs to 177 residues: Large ribosomal subunit protein uL6 (177 aa).

Belongs to the universal ribosomal protein uL6 family. Part of the 50S ribosomal subunit.

Functionally, this protein binds to the 23S rRNA, and is important in its secondary structure. It is located near the subunit interface in the base of the L7/L12 stalk, and near the tRNA binding site of the peptidyltransferase center. This Histophilus somni (strain 2336) (Haemophilus somnus) protein is Large ribosomal subunit protein uL6.